Here is a 515-residue protein sequence, read N- to C-terminus: 2-isopropylmalate synthase (515 aa).

The region spanning 4 to 264 (VKIFDTTLRD…NIGINQDTTQ (261 aa)) is the Pyruvate carboxyltransferase domain. The Mn(2+) site is built by D13, H201, H203, and N237. A regulatory domain region spans residues 390–515 (ELDYLSVNTG…RQTTSAQEGI (126 aa)).

It belongs to the alpha-IPM synthase/homocitrate synthase family. LeuA type 1 subfamily. As to quaternary structure, homodimer. Mn(2+) serves as cofactor.

It localises to the cytoplasm. The enzyme catalyses 3-methyl-2-oxobutanoate + acetyl-CoA + H2O = (2S)-2-isopropylmalate + CoA + H(+). The protein operates within amino-acid biosynthesis; L-leucine biosynthesis; L-leucine from 3-methyl-2-oxobutanoate: step 1/4. Catalyzes the condensation of the acetyl group of acetyl-CoA with 3-methyl-2-oxobutanoate (2-ketoisovalerate) to form 3-carboxy-3-hydroxy-4-methylpentanoate (2-isopropylmalate). This Halothermothrix orenii (strain H 168 / OCM 544 / DSM 9562) protein is 2-isopropylmalate synthase.